A 727-amino-acid chain; its full sequence is Glycerol-3-phosphate dehydrogenase, mitochondrial (727 aa).

Residues 1-42 (MAFQKVVKGTILMGGGALATVLGLSQFAHYRRKQVSLAYVEA) constitute a mitochondrion transit peptide. 71–99 (DILVIGGGATGCGCALDAVTRGLKTALVE) serves as a coordination point for FAD. Tyrosine 601 is modified (phosphotyrosine). 2 consecutive EF-hand domains span residues 623–658 (PDID…INVQ) and 659–694 (MDED…VHTG). Aspartate 672, asparagine 674, asparagine 676, glutamine 678, and glutamate 683 together coordinate Ca(2+).

It belongs to the FAD-dependent glycerol-3-phosphate dehydrogenase family. The cofactor is FAD.

It localises to the mitochondrion. The enzyme catalyses a quinone + sn-glycerol 3-phosphate = dihydroxyacetone phosphate + a quinol. The protein operates within polyol metabolism; glycerol degradation via glycerol kinase pathway; glycerone phosphate from sn-glycerol 3-phosphate (anaerobic route): step 1/1. Its activity is regulated as follows. Calcium-binding enhance the activity of the enzyme. Its function is as follows. Calcium-responsive mitochondrial glycerol-3-phosphate dehydrogenase which seems to be a key component of the pancreatic beta-cell glucose-sensing device. The sequence is that of Glycerol-3-phosphate dehydrogenase, mitochondrial from Rattus norvegicus (Rat).